Here is a 734-residue protein sequence, read N- to C-terminus: MALRFPRFSQGLAQDPTTRRIWFGIATAHDFESHDDITEERLYQNIFASHFGQLAIIFLWTSGNLFHVAWQGNFETWVQDPLHVRPIAHAIWDPHFGQPAVEAFTRGGALGPVNIAYSGVYQWWYTIGLRTNEDLYTGALFLLFLSAISLIGGWLHLQPKWKPRVSWFKNAESRLNHHLSGLFGVSSLAWTGHLVHVAIPASRGEYVRWNNFLNVLPHPQGLGPLFTGQWNLYAQNPDSSSHLFGTSQGSGTAILTLLGGFHPQTQSLWLTDIAHHHLAIAILFLIAGHMYRTNFGIGHSIKDLLEAHIPPGGRLGRGHKGLYDTINNSIHFQLGLALASLGVITSLVAQHMYSLPAYAFIAQDFTTQAALYTHHQYIAGFIMTGAFAHGAIFFIRDYNPEQNEDNVLARMLDHKEAIISHLSWASLFLGFHTLGLYVHNDVMLAFGTPEKQILIEPIFAQWIQSAHGKTSYGFDVLLSSTNGPAFNAGRSIWLPGWLNAINENSNSLFLTIGPGDFLVHHAIALGLHTTTLILVKGALDARGSKLMPDKKDFGYSFPCDGPGRGGTCDISAWDAFYLAVFWMLNTIGWVTFYWHWKHITLWQGNVSQFNESSTYLMGWLRDYLWLNSSQLINGYNPFGMNSLSVWAWMFLFGHLVWATGFMFLISWRGYWQELIETLAWAHERTPLANLIRWKDKPVALSIVQARLVGLAHFSVGYIFTYAAFLIASTSGKFG.

8 helical membrane passes run 46-69 (IFAS…FHVA), 135-158 (LYTG…LHLQ), 175-199 (LNHH…HVAI), 273-291 (IAHH…GHMY), 330-353 (IHFQ…QHMY), 369-395 (AALY…IFFI), 417-439 (AIIS…LYVH), and 517-535 (FLVH…LILV). [4Fe-4S] cluster is bound by residues cysteine 559 and cysteine 568. A run of 2 helical transmembrane segments spans residues 575–596 (AFYL…YWHW) and 643–665 (LSVW…MFLI). Positions 654, 662, and 670 each coordinate chlorophyll a. Tryptophan 671 lines the phylloquinone pocket. The helical transmembrane segment at 707-727 (LVGLAHFSVGYIFTYAAFLIA) threads the bilayer.

It belongs to the PsaA/PsaB family. The PsaA/B heterodimer binds the P700 chlorophyll special pair and subsequent electron acceptors. PSI consists of a core antenna complex that captures photons, and an electron transfer chain that converts photonic excitation into a charge separation. The eukaryotic PSI reaction center is composed of at least 11 subunits. It depends on P700 is a chlorophyll a/chlorophyll a' dimer, A0 is one or more chlorophyll a, A1 is one or both phylloquinones and FX is a shared 4Fe-4S iron-sulfur center. as a cofactor.

It localises to the plastid. The protein localises to the chloroplast thylakoid membrane. It catalyses the reaction reduced [plastocyanin] + hnu + oxidized [2Fe-2S]-[ferredoxin] = oxidized [plastocyanin] + reduced [2Fe-2S]-[ferredoxin]. Functionally, psaA and PsaB bind P700, the primary electron donor of photosystem I (PSI), as well as the electron acceptors A0, A1 and FX. PSI is a plastocyanin-ferredoxin oxidoreductase, converting photonic excitation into a charge separation, which transfers an electron from the donor P700 chlorophyll pair to the spectroscopically characterized acceptors A0, A1, FX, FA and FB in turn. Oxidized P700 is reduced on the lumenal side of the thylakoid membrane by plastocyanin. This chain is Photosystem I P700 chlorophyll a apoprotein A2, found in Aethionema grandiflorum (Persian stone-cress).